Here is a 506-residue protein sequence, read N- to C-terminus: Ecdysteroid UDP-glucosyltransferase (506 aa).

A signal peptide spans 1–18 (MTAYLIVFCLCCWSAARS).

This sequence belongs to the UDP-glycosyltransferase family.

In terms of biological role, catalyzes the transfer of glucose from UDP-glucose to ecdysteroids which are insect molting hormones. Expression of egt interferes with normal insect development and block molting. This is Ecdysteroid UDP-glucosyltransferase (EGT) from Lymantria dispar multicapsid nuclear polyhedrosis virus (LdMNPV).